The primary structure comprises 1086 residues: MAHLLKTVVAGCSCPFLSNLGSSKVLPGKRDFVRTLRTHQALWCKSPVKPGIPYKQLTVGVPKEIFQNEKRVALSPAGVQALVKQGFNVVVESGAGEASKFPDDLYRAAGAQIQGMKEVLASDLVVKVRAPMVNPTLGAHEADFLKPSGTLISFIYPAQNPDLLNKLSERKTTVLAMDQVPRVTIAQGYDALSSMANISGYKAVVLAANHFGRFFTGQITAAGKVPPAKILIVGGGVAGLASAGAAKSMGAVVRGFDTRAAALEQFKSLGAEPLEVDLKESGEGQGGYAKEMSKEFIEAEMKLFAQQCKEVDILISTALIPGKKAPVLFSKEMIESMKEGSVVVDLAAEAGGNFETTKPGELYVHKGITHIGYTDLPSRMATQASTLYSNNITKLLKAISPDKDNFHFEVKDDFDFGTMSHVIRGTVVMKDGKVIFPAPTPKNIPEEAPVKPKTVAELEAEKAGTVSMYTKTLTTASVYSAGLTGMLGLGIVAPNVAFSQMVTTFGLAGIIGYHTVWGVTPALHSPLMSVTNAISGLTAVGGLALMGGHFYPSTTSQSLAALATFISSVNIAGGFLVTQRMLDMFKRPTDPPEYNYLYLLPGGTFVGGYLAALYGGYNIEEIMYLGSGLCCVGALGGLSTQGTARLGNALGMIGVAGGLAATLGGLKPDPQLLAQMSGAMAMGGTIGLTIAKRIQISDLPQLVAAFHSLVGLAAVLTCMAEYIVEYPHFAMDATSNFTKIVAYLGTYIGGVTFSGSLVAYGKLQGILKSAPLLLPGRHALNAGLLAASVGGIIPFMADPSFTTGITCLGSVSGLSTLMGVTLTAAIGGADMPVVITVLNSYSGWALCAEGFLLNNNLLTIVGALIGSSGAILSYIMCVAMNRSLANVILGGYGTTSTAGGKPMEISGTHTEINLDNAVEMIREANSIVITPGYGLCAAKAQYPIADLVKMLTEQGKKVRFGIHPVAGRMPGQLNVLLAEAGVPYDIVLEMDEINSDFPDTDLVLVIGANDTVNSAAQEDPNSIIAGMPVLEVWKSKQVIVMKRSLGVGYAAVDNPIFYKPNTAMLLGDAKKTCDALQAKVRESYQK.

The transit peptide at 1–43 (MAHLLKTVVAGCSCPFLSNLGSSKVLPGKRDFVRTLRTHQALW) directs the protein to the mitochondrion. Residues 44-474 (CKSPVKPGIP…TVSMYTKTLT (431 aa)) lie on the Mitochondrial matrix side of the membrane. An N6-acetyllysine modification is found at lysine 70. At lysine 117 the chain carries N6-succinyllysine. 182–184 (RVT) contacts NAD(+). Lysine 224 is modified (N6-succinyllysine). NAD(+)-binding positions include valine 237, 257-259 (DTR), and glycine 287. Lysine 294 is modified (N6-succinyllysine). NAD(+)-binding residues include glutamate 300 and leucine 319. Lysine 331 bears the N6-succinyllysine mark. The residue at position 397 (lysine 397) is an N6-acetyllysine. Transmembrane regions (helical) follow at residues 475–493 (TASVYSAGLTGMLGLGIVA), 501–521 (MVTTFGLAGIIGYHTVWGVTP), 527–546 (LMSVTNAISGLTAVGGLALM), and 558–578 (SLAALATFISSVNIAGGFLVT). The Mitochondrial matrix portion of the chain corresponds to 579–595 (QRMLDMFKRPTDPPEYN). Transmembrane regions (helical) follow at residues 596 to 616 (YLYLLPGGTFVGGYLAALYGG), 622 to 642 (IMYLGSGLCCVGALGGLSTQG), 646 to 666 (LGNALGMIGVAGGLAATLGGL), 672 to 691 (LLAQMSGAMAMGGTIGLTIA), and 702 to 722 (LVAAFHSLVGLAAVLTCMAEY). Over 723–739 (IVEYPHFAMDATSNFTK) the chain is Cytoplasmic. The next 5 membrane-spanning stretches (helical) occupy residues 740–760 (IVAYLGTYIGGVTFSGSLVAY), 778–797 (HALNAGLLAASVGGIIPFMA), 801–819 (FTTGITCLGSVSGLSTLMG), 833–853 (VVITVLNSYSGWALCAEGFLL), and 857–879 (LLTIVGALIGSSGAILSYIMCVA). Over 880-1086 (MNRSLANVIL…QAKVRESYQK (207 aa)) the chain is Mitochondrial matrix. Residues tyrosine 933, 965-970 (VAGRMP), 1007-1011 (GANDT), 1026-1027 (GM), 1042-1049 (KRSLGVGY), and 1068-1069 (DA) contribute to the NADP(+) site. Position 1079 is an N6-succinyllysine (lysine 1079).

This sequence in the N-terminal section; belongs to the AlaDH/PNT family. In the C-terminal section; belongs to the PNT beta subunit family. As to quaternary structure, homodimer. As to expression, widely expressed with expression most readily detectable in adrenal, heart, kidney, thyroid and adipose tissues.

The protein resides in the mitochondrion inner membrane. The enzyme catalyses NAD(+) + NADPH + H(+)(in) = NADH + NADP(+) + H(+)(out). The transhydrogenation between NADH and NADP is coupled to respiration and ATP hydrolysis and functions as a proton pump across the membrane. May play a role in reactive oxygen species (ROS) detoxification in the adrenal gland. This is NAD(P) transhydrogenase, mitochondrial (Nnt) from Mus musculus (Mouse).